Reading from the N-terminus, the 132-residue chain is MSWQAYVDDHLMCDVGDGNTPASAAIIGHDGSVWAQSANFPQLKPEEVTGIMNDFNEAGFLAPTGLFLGGTKYMVIQGESGAVIRGKKGSGGATLKKTGQAIVIGIYDEPMTPGQCNLVVERLGDYLLEQGL.

The protein belongs to the profilin family. Occurs in many kinds of cells as a complex with monomeric actin in a 1:1 ratio.

The protein resides in the cytoplasm. Its subcellular location is the cytoskeleton. Functionally, binds to actin and affects the structure of the cytoskeleton. At high concentrations, profilin prevents the polymerization of actin, whereas it enhances it at low concentrations. By binding to PIP2, it inhibits the formation of IP3 and DG. This is Profilin-1 (PRO1) from Parietaria judaica (Pellitory-of-the-wall).